The primary structure comprises 143 residues: uncharacterized protein (143 aa).

The N-terminal stretch at 1 to 27 (MSDEIARLVADVFELAGLLRRSGEVVA) is a signal peptide.

This is an uncharacterized protein from Mycobacterium tuberculosis (strain CDC 1551 / Oshkosh).